The chain runs to 259 residues: uncharacterized protein (259 aa).

In terms of domain architecture, N-acetyltransferase spans 110 to 259 (QMGHPLTAWG…VHTVFHYFLT (150 aa)).

In terms of biological role, may be involved in maturation of the outermost layer of the spore. This is an uncharacterized protein from Bacillus subtilis (strain 168).